A 462-amino-acid polypeptide reads, in one-letter code: Light-independent protochlorophyllide reductase subunit N (462 aa).

Residues cysteine 24, cysteine 49, and cysteine 109 each coordinate [4Fe-4S] cluster.

Belongs to the BchN/ChlN family. Protochlorophyllide reductase is composed of three subunits; ChlL, ChlN and ChlB. Forms a heterotetramer of two ChlB and two ChlN subunits. [4Fe-4S] cluster is required as a cofactor.

It is found in the plastid. The protein localises to the chloroplast. The catalysed reaction is chlorophyllide a + oxidized 2[4Fe-4S]-[ferredoxin] + 2 ADP + 2 phosphate = protochlorophyllide a + reduced 2[4Fe-4S]-[ferredoxin] + 2 ATP + 2 H2O. Its pathway is porphyrin-containing compound metabolism; chlorophyll biosynthesis (light-independent). In terms of biological role, component of the dark-operative protochlorophyllide reductase (DPOR) that uses Mg-ATP and reduced ferredoxin to reduce ring D of protochlorophyllide (Pchlide) to form chlorophyllide a (Chlide). This reaction is light-independent. The NB-protein (ChlN-ChlB) is the catalytic component of the complex. This chain is Light-independent protochlorophyllide reductase subunit N, found in Pleurastrum terricola (Filamentous green alga).